Consider the following 87-residue polypeptide: Large ribosomal subunit protein uL23c (87 aa).

This sequence belongs to the universal ribosomal protein uL23 family. In terms of assembly, part of the 50S ribosomal subunit.

The protein localises to the plastid. It localises to the chloroplast. In terms of biological role, binds to 23S rRNA. The polypeptide is Large ribosomal subunit protein uL23c (rpl23) (Bigelowiella natans (Pedinomonas minutissima)).